The sequence spans 309 residues: HPr kinase/phosphorylase (309 aa).

Residues His138 and Lys159 contribute to the active site. 153–160 contributes to the ATP binding site; it reads GASGIGKS. Ser160 serves as a coordination point for Mg(2+). Asp177 functions as the Proton acceptor; for phosphorylation activity. Proton donor; for dephosphorylation activity in the catalytic mechanism. The important for the catalytic mechanism of both phosphorylation and dephosphorylation stretch occupies residues 201-210; that stretch reads IEIRGVGIID. Residue Glu202 participates in Mg(2+) binding. The active site involves Arg243. Positions 264–269 are important for the catalytic mechanism of dephosphorylation; that stretch reads PVKTGR.

The protein belongs to the HPrK/P family. Homohexamer. It depends on Mg(2+) as a cofactor.

The enzyme catalyses [HPr protein]-L-serine + ATP = [HPr protein]-O-phospho-L-serine + ADP + H(+). It carries out the reaction [HPr protein]-O-phospho-L-serine + phosphate + H(+) = [HPr protein]-L-serine + diphosphate. Functionally, catalyzes the ATP- as well as the pyrophosphate-dependent phosphorylation of a specific serine residue in HPr, a phosphocarrier protein of the phosphoenolpyruvate-dependent sugar phosphotransferase system (PTS). HprK/P also catalyzes the pyrophosphate-producing, inorganic phosphate-dependent dephosphorylation (phosphorolysis) of seryl-phosphorylated HPr (P-Ser-HPr). The two antagonistic activities of HprK/P are regulated by several intracellular metabolites, which change their concentration in response to the absence or presence of rapidly metabolisable carbon sources (glucose, fructose, etc.) in the growth medium. Therefore, by controlling the phosphorylation state of HPr, HPrK/P is a sensor enzyme that plays a major role in the regulation of carbon metabolism and sugar transport: it mediates carbon catabolite repression (CCR), and regulates PTS-catalyzed carbohydrate uptake and inducer exclusion. This is HPr kinase/phosphorylase from Lactococcus lactis subsp. lactis (strain IL1403) (Streptococcus lactis).